A 404-amino-acid polypeptide reads, in one-letter code: Argininosuccinate synthase (404 aa).

Residues 10–18 (AYSGGVDTS) and A38 each bind ATP. Y89 serves as a coordination point for L-citrulline. An ATP-binding site is contributed by G119. L-aspartate contacts are provided by T121, N125, and D126. Residue N125 participates in L-citrulline binding. 5 residues coordinate L-citrulline: R129, S177, S186, E262, and Y274.

It belongs to the argininosuccinate synthase family. Type 1 subfamily. In terms of assembly, homotetramer.

Its subcellular location is the cytoplasm. It carries out the reaction L-citrulline + L-aspartate + ATP = 2-(N(omega)-L-arginino)succinate + AMP + diphosphate + H(+). The protein operates within amino-acid biosynthesis; L-arginine biosynthesis; L-arginine from L-ornithine and carbamoyl phosphate: step 2/3. This chain is Argininosuccinate synthase, found in Prochlorococcus marinus subsp. pastoris (strain CCMP1986 / NIES-2087 / MED4).